Reading from the N-terminus, the 257-residue chain is Neurotrophin-3 (257 aa).

The first 18 residues, 1-18, serve as a signal peptide directing secretion; sequence MSILFYMIFLAYLRGIQG. Residues 19–138 constitute a propeptide that is removed on maturation; sequence NSMDQRRLPE…VANRTARRKR (120 aa). The interval 61 to 81 is disordered; that stretch reads STLPKAEAPREPERGEPAKSE. Residues 67 to 79 show a composition bias toward basic and acidic residues; sequence EAPREPERGEPAK. Residue Asn-131 is glycosylated (N-linked (GlcNAc...) asparagine). 3 cysteine pairs are disulfide-bonded: Cys-152/Cys-217, Cys-195/Cys-246, and Cys-205/Cys-248.

The protein belongs to the NGF-beta family.

It is found in the secreted. Its function is as follows. Seems to promote the survival of visceral and proprioceptive sensory neurons. The chain is Neurotrophin-3 (NTF3) from Sus scrofa (Pig).